A 340-amino-acid polypeptide reads, in one-letter code: Uroporphyrinogen decarboxylase (340 aa).

Residues 21 to 25 (RQAGR), D71, Y148, S203, and H316 each bind substrate.

Belongs to the uroporphyrinogen decarboxylase family. Homodimer.

It is found in the cytoplasm. The catalysed reaction is uroporphyrinogen III + 4 H(+) = coproporphyrinogen III + 4 CO2. The protein operates within porphyrin-containing compound metabolism; protoporphyrin-IX biosynthesis; coproporphyrinogen-III from 5-aminolevulinate: step 4/4. In terms of biological role, catalyzes the decarboxylation of four acetate groups of uroporphyrinogen-III to yield coproporphyrinogen-III. This chain is Uroporphyrinogen decarboxylase, found in Campylobacter lari (strain RM2100 / D67 / ATCC BAA-1060).